The primary structure comprises 717 residues: Aryl hydrocarbon receptor nuclear translocator 2 (717 aa).

Disordered regions lie at residues 1-20 (MATP…PGSV) and 35-74 (MAGA…IERR). Position 42 is an omega-N-methylarginine (R42). Basic and acidic residues predominate over residues 63-73 (FSRENHSEIER). In terms of domain architecture, bHLH spans 63 to 116 (FSRENHSEIERRRRNKMTQYITELSDMVPTCSALARKPDKLTILRMAVSHMKSM). PAS domains lie at 134 to 209 (TEQE…MTGR) and 323 to 393 (PVCM…VKLK). The 44-residue stretch at 398–441 (SVMYRFRTKNREWMLIRTSSFTFQNPYSDEIEYIICTNTNVKQL) folds into the PAC domain. Positions 548–717 (NDIQSSSSTG…DLGMFPPFSE (170 aa)) are disordered. 2 stretches are compositionally biased toward polar residues: residues 549–574 (DIQS…QVAW) and 585–605 (QIPS…TSHT). Residues 610–625 (PSSYSPLSSPATSSPS) show a composition bias toward low complexity. The span at 642–651 (SGQSSGQFQG) shows a compositional bias: polar residues. Low complexity predominate over residues 658 to 680 (SQWQSQHHGQQSGEQHSHQQPGQ).

In terms of assembly, efficient DNA binding requires dimerization with another bHLH protein. Heterodimer with NPAS4. Heterodimer with SIM1. Heterodimer with the aryl hydrocarbon receptor (AHR) or the SIM1 protein. Interacts with TACC3.

The protein resides in the nucleus. In terms of biological role, transcription factor that plays a role in the development of the hypothalamo-pituitary axis, postnatal brain growth, and visual and renal function. Specifically recognizes the xenobiotic response element (XRE). This is Aryl hydrocarbon receptor nuclear translocator 2 (ARNT2) from Homo sapiens (Human).